Here is a 143-residue protein sequence, read N- to C-terminus: UPF0651 protein P31B10.02, mitochondrial (143 aa).

Positions 48-93 (IYDGIRVPPKPEEPLNCCQSGCAICVWDVYADDLEEYNRARRKAKR) constitute an Oxidoreductase-like domain.

It belongs to the UPF0651 family.

The protein localises to the mitochondrion. The sequence is that of UPF0651 protein P31B10.02, mitochondrial from Schizosaccharomyces pombe (strain 972 / ATCC 24843) (Fission yeast).